We begin with the raw amino-acid sequence, 360 residues long: 3-dehydroquinate synthase (360 aa).

NAD(+) is bound by residues 70 to 75, 104 to 108, 128 to 129, K141, and K150; these read DGEKYK, GVIGD, and TT. Zn(2+)-binding residues include E183, H246, and H263.

It belongs to the sugar phosphate cyclases superfamily. Dehydroquinate synthase family. It depends on Co(2+) as a cofactor. Zn(2+) serves as cofactor. NAD(+) is required as a cofactor.

The protein localises to the cytoplasm. It catalyses the reaction 7-phospho-2-dehydro-3-deoxy-D-arabino-heptonate = 3-dehydroquinate + phosphate. It functions in the pathway metabolic intermediate biosynthesis; chorismate biosynthesis; chorismate from D-erythrose 4-phosphate and phosphoenolpyruvate: step 2/7. In terms of biological role, catalyzes the conversion of 3-deoxy-D-arabino-heptulosonate 7-phosphate (DAHP) to dehydroquinate (DHQ). The chain is 3-dehydroquinate synthase from Acinetobacter baumannii (strain SDF).